Here is a 193-residue protein sequence, read N- to C-terminus: NADH-quinone oxidoreductase subunit B (193 aa).

The [4Fe-4S] cluster site is built by cysteine 72, cysteine 73, cysteine 137, and cysteine 167.

The protein belongs to the complex I 20 kDa subunit family. As to quaternary structure, NDH-1 is composed of 14 different subunits. Subunits NuoB, C, D, E, F, and G constitute the peripheral sector of the complex. It depends on [4Fe-4S] cluster as a cofactor.

It is found in the cell inner membrane. It carries out the reaction a quinone + NADH + 5 H(+)(in) = a quinol + NAD(+) + 4 H(+)(out). In terms of biological role, NDH-1 shuttles electrons from NADH, via FMN and iron-sulfur (Fe-S) centers, to quinones in the respiratory chain. Couples the redox reaction to proton translocation (for every two electrons transferred, four hydrogen ions are translocated across the cytoplasmic membrane), and thus conserves the redox energy in a proton gradient. This is NADH-quinone oxidoreductase subunit B from Brucella anthropi (strain ATCC 49188 / DSM 6882 / CCUG 24695 / JCM 21032 / LMG 3331 / NBRC 15819 / NCTC 12168 / Alc 37) (Ochrobactrum anthropi).